The chain runs to 165 residues: Urease accessory protein UreE (165 aa).

The protein belongs to the UreE family.

It is found in the cytoplasm. Functionally, involved in urease metallocenter assembly. Binds nickel. Probably functions as a nickel donor during metallocenter assembly. In Flavobacterium johnsoniae (strain ATCC 17061 / DSM 2064 / JCM 8514 / BCRC 14874 / CCUG 350202 / NBRC 14942 / NCIMB 11054 / UW101) (Cytophaga johnsonae), this protein is Urease accessory protein UreE.